Reading from the N-terminus, the 747-residue chain is Histone-lysine N-methyltransferase EZH1 (747 aa).

The interval 188 to 231 (DEEEEGHNDTSDGKQDDSKEDLPVTRKRKRHAIEGNKKSSKKQF) is disordered. Residues 194–211 (HNDTSDGKQDDSKEDLPV) are compositionally biased toward basic and acidic residues. Lysine 327 is covalently cross-linked (Glycyl lysine isopeptide (Lys-Gly) (interchain with G-Cter in SUMO2)). The tract at residues 378-421 (SAVAETKEGDSDRDTGNDWASSSSEANSRCQTPTKQKASPAPPQ) is disordered. The span at 382-393 (ETKEGDSDRDTG) shows a compositional bias: basic and acidic residues. Residues 395–414 (DWASSSSEANSRCQTPTKQK) show a composition bias toward polar residues. Positions 491 to 496 (QKKKRK) match the Nuclear localization signal motif. The region spanning 504-606 (CRKIQLKKDN…CKVVSCKNCS (103 aa)) is the CXC domain. The SET domain occupies 613-728 (KHLLLAPSDV…AGEELFLDYR (116 aa)).

The protein belongs to the class V-like SAM-binding methyltransferase superfamily. Histone-lysine methyltransferase family. EZ subfamily. In terms of assembly, component of the PRC2/EED-EZH1 complex, which includes EED, EZH1, SUZ12, RBBP4 and AEBP2. The PRC2/EED-EZH1 is less abundant than the PRC2/EED-EZH2 complex, has weak methyltransferase activity and compacts chromatin in the absence of the methyltransferase cofactor S-adenosyl-L-methionine (SAM). Interacts with EZHIP; the interaction blocks EZH1 methyltransferase activity.

It localises to the nucleus. It carries out the reaction L-lysyl(27)-[histone H3] + 3 S-adenosyl-L-methionine = N(6),N(6),N(6)-trimethyl-L-lysyl(27)-[histone H3] + 3 S-adenosyl-L-homocysteine + 3 H(+). In terms of biological role, polycomb group (PcG) protein. Catalytic subunit of the PRC2/EED-EZH1 complex, which methylates 'Lys-27' of histone H3, leading to transcriptional repression of the affected target gene. Able to mono-, di- and trimethylate 'Lys-27' of histone H3 to form H3K27me1, H3K27me2 and H3K27me3, respectively. Required for embryonic stem cell derivation and self-renewal, suggesting that it is involved in safeguarding embryonic stem cell identity. Compared to EZH2-containing complexes, it is less abundant in embryonic stem cells, has weak methyltransferase activity and plays a less critical role in forming H3K27me3, which is required for embryonic stem cell identity and proper differentiation. The chain is Histone-lysine N-methyltransferase EZH1 (EZH1) from Pongo abelii (Sumatran orangutan).